The following is a 365-amino-acid chain: GDSL esterase/lipase At3g62280 (365 aa).

The first 25 residues, 1–25 (MDYTVSSLQCFFLVLCLSLLVCSNS), serve as a signal peptide directing secretion. Serine 43 serves as the catalytic Nucleophile. Asparagine 137, asparagine 178, and asparagine 231 each carry an N-linked (GlcNAc...) asparagine glycan. Catalysis depends on residues aspartate 333 and histidine 336.

It belongs to the 'GDSL' lipolytic enzyme family.

It localises to the secreted. The protein is GDSL esterase/lipase At3g62280 of Arabidopsis thaliana (Mouse-ear cress).